The primary structure comprises 185 residues: Mitochondrial inner membrane protease atp23 (185 aa).

Position 86 (histidine 86) interacts with a divalent metal cation. The active site involves glutamate 87. Histidine 90 contacts a divalent metal cation.

Belongs to the peptidase M76 family.

Its subcellular location is the mitochondrion inner membrane. Its function is as follows. Has a dual role in the assembly of mitochondrial ATPase. Acts as a protease that removes N-terminal residues of mitochondrial ATPase CF(0) subunit 6 at the intermembrane space side. Also involved in the correct assembly of the membrane-embedded ATPase CF(0) particle, probably mediating association of subunit 6 with the subunit 9 ring. The protein is Mitochondrial inner membrane protease atp23 (atp23) of Schizosaccharomyces pombe (strain 972 / ATCC 24843) (Fission yeast).